Here is a 220-residue protein sequence, read N- to C-terminus: UPF0502 protein VV2_0756 (220 aa).

It belongs to the UPF0502 family.

The polypeptide is UPF0502 protein VV2_0756 (Vibrio vulnificus (strain CMCP6)).